Reading from the N-terminus, the 271-residue chain is Co-chaperone protein DjlA (271 aa).

Over 1–6 (MQYWGK) the chain is Periplasmic. A helical transmembrane segment spans residues 7 to 31 (IIGVAVALLMGGGFWGVVLGLLIGH). Over 32–271 (MFDKARSRKM…ELIKQQKGFK (240 aa)) the chain is Cytoplasmic. The J domain occupies 205 to 271 (DACNVLGVKP…ELIKQQKGFK (67 aa)).

Homodimer.

The protein localises to the cell inner membrane. Regulatory DnaK co-chaperone. Direct interaction between DnaK and DjlA is needed for the induction of the wcaABCDE operon, involved in the synthesis of a colanic acid polysaccharide capsule, possibly through activation of the RcsB/RcsC phosphotransfer signaling pathway. The colanic acid capsule may help the bacterium survive conditions outside the host. The polypeptide is Co-chaperone protein DjlA (Escherichia coli (strain K12)).